The chain runs to 643 residues: MRLVEIGALSADSDLVLWEASCETISHQISLKLARKEGGLMEIFNSVVASLPRKSDSFRFSAISSKTSWESAHRNLLENLTKTVPVLLENGWKKSPDFQKNSLIDLFSLLEDEDATRIFKMTQESRSITEDDVEDYFSMFDKKFDRLLTYGAPQFENCVRDSPMRQKYANLCVEVLVAVGASVKNAQKITDFLEKQSMKVSKIWMTRIPEIFEKITNFYDYPMMFDVAMALDGFPLRKVFLARRFALQSILEVFIEMAPNTKYKVRERVRQELEKASRFVGYASEMGHDNLLSSFSPKIVSSIEDSKHILEVETIERLRRCGYLENLGAPLDELVRAQIASIREILPHFSAEFVHLALRHFSYDSEVTLASLLSRENLPLELLRLENVELRAGIGSGEWPPLDFTASDEIEKLARADKRAKDEETRKNNETKSASNLFSLAPILSDRPPSPPVDQQAELRAHAEAYRTSVLTKLQKIRADAAGPSSPSEKIAVDAENLVPLATSKKYSALNSLKISEADKVAIRPTYNKYRYETPNDGGNGVYDDEYDDEFDGREFNIERLNQELETSSEEDEAGSSAPPGLSQPPPYQGSRGGRGGRGARGGNRGGAPSADGYTGGHDRQMKEKHKSDIKQRGADRKKRGVY.

Positions 561 to 643 are disordered; that stretch reads LNQELETSSE…GADRKKRGVY (83 aa). The segment covering 591 to 606 has biased composition (gly residues); sequence SRGGRGGRGARGGNRG. The span at 617 to 635 shows a compositional bias: basic and acidic residues; the sequence is GHDRQMKEKHKSDIKQRGA.

This is an uncharacterized protein from Caenorhabditis elegans.